The sequence spans 463 residues: Glycine--tRNA ligase (463 aa).

Substrate contacts are provided by Arg100 and Glu175. ATP is bound by residues 207–209 (RNE), 217–222 (FRTREF), 291–292 (EL), and 335–338 (GADR). A substrate-binding site is contributed by 222–226 (FEQME). Position 331-335 (331-335 (EPSVG)) interacts with substrate.

Belongs to the class-II aminoacyl-tRNA synthetase family. In terms of assembly, homodimer.

The protein resides in the cytoplasm. It carries out the reaction tRNA(Gly) + glycine + ATP = glycyl-tRNA(Gly) + AMP + diphosphate. Functionally, catalyzes the attachment of glycine to tRNA(Gly). This Clostridium kluyveri (strain NBRC 12016) protein is Glycine--tRNA ligase.